The sequence spans 596 residues: MKHIRNFSIIAHIDHGKSTLSDRLIQECGGLSDREMAAQVLDSMDIERERGITIKAQSVTLDYKALDGETYQLNFIDTPGHVDFSYEVSRSLAACEGALLVVDAGQGVEAQTLANCYTALEMDMDVVPVLNKIDLPQADPERVADEIEDIVGIEAADAVRCSAKTGIGIKDVLEVIVAQIPPPEGDTEGPLQALIIDSWFDSYLGVVSLVRIKNGILKKGDKFKVMSTGQTYNADRVGIFTPKQTDTAELKTGEVGFVIAGIKEIHGAPVGDTLTHAKHGAEKPLGGFKKVKPQVYAGVFPISTDDYESFRDALNKLSLNDASLFFEPETSSALGFGFRIGFLGLLHMEIIQERLEREYNLDLITTAPTVVYEIVKTSGDTIYVDNPSDLPAINNIAEMREPIVETNILVPKDYLGNVITLCVEKRGVQKNMVYHGNQVAITYELPMAEVVMDFFDRLKSTSRGYASLEYNFVRFEPADMVRLDILINGDRVDALAMIIHKGLIRTKGLALVNKMKELIPRQMFDIAVQAAVGSQIIARSSIKAMRKDVTAKCYGGDVSRKKKLLNKQKEGKKRMKSVGNVEVPQEAFLAVLKLND.

The tr-type G domain occupies 2–184; that stretch reads KHIRNFSIIA…VIVAQIPPPE (183 aa). Residues 14-19 and 131-134 each bind GTP; these read DHGKST and NKID.

Belongs to the TRAFAC class translation factor GTPase superfamily. Classic translation factor GTPase family. LepA subfamily.

It localises to the cell inner membrane. It catalyses the reaction GTP + H2O = GDP + phosphate + H(+). Required for accurate and efficient protein synthesis under certain stress conditions. May act as a fidelity factor of the translation reaction, by catalyzing a one-codon backward translocation of tRNAs on improperly translocated ribosomes. Back-translocation proceeds from a post-translocation (POST) complex to a pre-translocation (PRE) complex, thus giving elongation factor G a second chance to translocate the tRNAs correctly. Binds to ribosomes in a GTP-dependent manner. This chain is Elongation factor 4, found in Shewanella woodyi (strain ATCC 51908 / MS32).